The primary structure comprises 353 residues: Ferredoxin--NADP reductase (353 aa).

T25, E44, Q52, Y57, V97, F132, D298, and S339 together coordinate FAD.

The protein belongs to the ferredoxin--NADP reductase type 2 family. In terms of assembly, homodimer. It depends on FAD as a cofactor.

It catalyses the reaction 2 reduced [2Fe-2S]-[ferredoxin] + NADP(+) + H(+) = 2 oxidized [2Fe-2S]-[ferredoxin] + NADPH. The sequence is that of Ferredoxin--NADP reductase from Chlorobium chlorochromatii (strain CaD3).